The chain runs to 339 residues: DNA-directed RNA polymerase subunit alpha (339 aa).

The tract at residues 1–233 is alpha N-terminal domain (alpha-NTD); that stretch reads MVREEVAGST…DLFLPFLHAE (233 aa). The tract at residues 266 to 339 is alpha C-terminal domain (alpha-CTD); the sequence is GIPLNCIFID…IDLLKNKLSF (74 aa).

It belongs to the RNA polymerase alpha chain family. In plastids the minimal PEP RNA polymerase catalytic core is composed of four subunits: alpha, beta, beta', and beta''. When a (nuclear-encoded) sigma factor is associated with the core the holoenzyme is formed, which can initiate transcription.

The protein resides in the plastid. It is found in the chloroplast. It carries out the reaction RNA(n) + a ribonucleoside 5'-triphosphate = RNA(n+1) + diphosphate. DNA-dependent RNA polymerase catalyzes the transcription of DNA into RNA using the four ribonucleoside triphosphates as substrates. The chain is DNA-directed RNA polymerase subunit alpha from Aegilops speltoides (Goatgrass).